The following is a 142-amino-acid chain: Ribosome maturation factor RimP (142 aa).

This sequence belongs to the RimP family.

It localises to the cytoplasm. Required for maturation of 30S ribosomal subunits. The sequence is that of Ribosome maturation factor RimP from Wolinella succinogenes (strain ATCC 29543 / DSM 1740 / CCUG 13145 / JCM 31913 / LMG 7466 / NCTC 11488 / FDC 602W) (Vibrio succinogenes).